We begin with the raw amino-acid sequence, 31 residues long: MLTITSYFGFLLVALTITSALFIGLSKIRLI.

A helical transmembrane segment spans residues 4–24; it reads ITSYFGFLLVALTITSALFIG.

It belongs to the PetL family. As to quaternary structure, the 4 large subunits of the cytochrome b6-f complex are cytochrome b6, subunit IV (17 kDa polypeptide, PetD), cytochrome f and the Rieske protein, while the 4 small subunits are PetG, PetL, PetM and PetN. The complex functions as a dimer.

Its subcellular location is the plastid. The protein resides in the chloroplast thylakoid membrane. Functionally, component of the cytochrome b6-f complex, which mediates electron transfer between photosystem II (PSII) and photosystem I (PSI), cyclic electron flow around PSI, and state transitions. PetL is important for photoautotrophic growth as well as for electron transfer efficiency and stability of the cytochrome b6-f complex. The polypeptide is Cytochrome b6-f complex subunit 6 (Pelargonium hortorum (Common geranium)).